Reading from the N-terminus, the 151-residue chain is UPF0208 membrane protein Ent638_2839 (151 aa).

2 helical membrane-spanning segments follow: residues tyrosine 46 to leucine 65 and leucine 69 to glycine 91.

It belongs to the UPF0208 family.

The protein resides in the cell inner membrane. In Enterobacter sp. (strain 638), this protein is UPF0208 membrane protein Ent638_2839.